The following is a 227-amino-acid chain: Cytochrome c oxidase subunit 2 (227 aa).

Residues 1 to 26 (MNTWMNFNLQNSNSPLMEQLMFFHNH) lie on the Mitochondrial intermembrane side of the membrane. Residues 27–48 (SMLIILLITILVGYIMSSLLYN) traverse the membrane as a helical segment. The Mitochondrial matrix portion of the chain corresponds to 49-62 (KLYNRYLLESQNVE). A helical transmembrane segment spans residues 63–82 (IIWTILPAFMLIFIALPSLR). Topologically, residues 83–227 (LLYLLDDSNS…SFIKWISSNS (145 aa)) are mitochondrial intermembrane. His161, Cys196, Glu198, Cys200, His204, and Met207 together coordinate Cu cation. Position 198 (Glu198) interacts with Mg(2+).

This sequence belongs to the cytochrome c oxidase subunit 2 family. As to quaternary structure, component of the cytochrome c oxidase (complex IV, CIV), a multisubunit enzyme composed of a catalytic core of 3 subunits and several supernumerary subunits. The complex exists as a monomer or a dimer and forms supercomplexes (SCs) in the inner mitochondrial membrane with ubiquinol-cytochrome c oxidoreductase (cytochrome b-c1 complex, complex III, CIII). The cofactor is Cu cation.

The protein resides in the mitochondrion inner membrane. It catalyses the reaction 4 Fe(II)-[cytochrome c] + O2 + 8 H(+)(in) = 4 Fe(III)-[cytochrome c] + 2 H2O + 4 H(+)(out). Its function is as follows. Component of the cytochrome c oxidase, the last enzyme in the mitochondrial electron transport chain which drives oxidative phosphorylation. The respiratory chain contains 3 multisubunit complexes succinate dehydrogenase (complex II, CII), ubiquinol-cytochrome c oxidoreductase (cytochrome b-c1 complex, complex III, CIII) and cytochrome c oxidase (complex IV, CIV), that cooperate to transfer electrons derived from NADH and succinate to molecular oxygen, creating an electrochemical gradient over the inner membrane that drives transmembrane transport and the ATP synthase. Cytochrome c oxidase is the component of the respiratory chain that catalyzes the reduction of oxygen to water. Electrons originating from reduced cytochrome c in the intermembrane space (IMS) are transferred via the dinuclear copper A center (CU(A)) of subunit 2 and heme A of subunit 1 to the active site in subunit 1, a binuclear center (BNC) formed by heme A3 and copper B (CU(B)). The BNC reduces molecular oxygen to 2 water molecules using 4 electrons from cytochrome c in the IMS and 4 protons from the mitochondrial matrix. The chain is Cytochrome c oxidase subunit 2 (COII) from Ctenocephalides felis (Cat flea).